We begin with the raw amino-acid sequence, 173 residues long: uncharacterized protein (173 aa).

The region spanning 2–171 (VTVREAKLED…PDLSALKTLL (170 aa)) is the N-acetyltransferase domain.

Belongs to the acetyltransferase family.

This is an uncharacterized protein from Bacillus subtilis (strain 168).